The chain runs to 222 residues: V-type ATP synthase subunit D (222 aa).

This sequence belongs to the V-ATPase D subunit family.

Functionally, produces ATP from ADP in the presence of a proton gradient across the membrane. This is V-type ATP synthase subunit D from Deinococcus geothermalis (strain DSM 11300 / CIP 105573 / AG-3a).